The primary structure comprises 476 residues: NAC domain-containing protein 86 (476 aa).

Residues 6–157 (LPPGFRFHPT…AYALCRVFKK (152 aa)) form the NAC domain. The DNA-binding element occupies 105–163 (IGTKKTLVYYRGRAPHGIRTGWVMHEYRLDESECEPSAFGMQDAYALCRVFKKIVIEAK).

Expressed in a few sieve element cells before enucleation and in phloem-pole pericycle cells.

It is found in the nucleus. Functionally, transcription factor directing sieve element enucleation and cytosol degradation. Not required for formation of lytic vacuoles. Regulates, with NAC045, the transcription of NEN1, NEN2, NEN3, NEN4, RTM1, RTM2, UBP16, PLDZETA, ABCB10 and At1g26450. The sequence is that of NAC domain-containing protein 86 from Arabidopsis thaliana (Mouse-ear cress).